Consider the following 75-residue polypeptide: Small ribosomal subunit protein bS18 (75 aa).

Belongs to the bacterial ribosomal protein bS18 family. Part of the 30S ribosomal subunit. Forms a tight heterodimer with protein bS6.

Its function is as follows. Binds as a heterodimer with protein bS6 to the central domain of the 16S rRNA, where it helps stabilize the platform of the 30S subunit. The chain is Small ribosomal subunit protein bS18 from Buchnera aphidicola subsp. Baizongia pistaciae (strain Bp).